We begin with the raw amino-acid sequence, 142 residues long: Mitochondrial import receptor subunit TOM22 homolog (142 aa).

The span at 1-18 shows a compositional bias: low complexity; it reads MAAAVAAAGAGEPLSPEE. Residues 1-41 form a disordered region; that stretch reads MAAAVAAAGAGEPLSPEELLPKAEAEKAEEELEEDDDDELD. An N-acetylalanine modification is found at Ala-2. Over 2-83 the chain is Cytoplasmic; the sequence is AAAVAAAGAG…AQKMYRFSRA (82 aa). A Phosphoserine modification is found at Ser-15. Residues 27–41 are compositionally biased toward acidic residues; sequence KAEEELEEDDDDELD. The tract at residues 41-50 is import sequence; necessary for mitochondrion outer membrane localization and integration in the TOM complex; the sequence is DETLSERLWG. Thr-43 bears the Phosphothreonine mark. Ser-45 is modified (phosphoserine). A TMD; necessary for mitochondrion outer membrane localization and integration in the TOM complex region spans residues 83-103; the sequence is AALWIGTTSFMILVLPVVFET. The chain crosses the membrane as a helical span at residues 84 to 103; sequence ALWIGTTSFMILVLPVVFET. The Mitochondrial intermembrane segment spans residues 104-142; the sequence is EKLQMEQQQQLQQRQILLGPNTGLSGGMPGALPPLPGKM. Residues 123–142 are C-tail signal; necessary for mitochondrion outer membrane localization and integration in the TOM complex; that stretch reads PNTGLSGGMPGALPPLPGKM.

It belongs to the Tom22 family. As to quaternary structure, forms part of the preprotein translocase complex of the outer mitochondrial membrane (TOM complex) which consists of at least 7 different proteins (TOMM5, TOMM6, TOMM7, TOMM20, TOMM22, TOMM40 and TOMM70). Interacts with PPP2R2B and TOMM40.

Its subcellular location is the mitochondrion outer membrane. In terms of biological role, central receptor component of the translocase of the outer membrane of mitochondria (TOM complex) responsible for the recognition and translocation of cytosolically synthesized mitochondrial preproteins. Together with the peripheral receptor TOM20 functions as the transit peptide receptor and facilitates the movement of preproteins into the translocation pore. Required for the translocation across the mitochondrial outer membrane of cytochrome P450 monooxygenases. In Mus musculus (Mouse), this protein is Mitochondrial import receptor subunit TOM22 homolog (Tomm22).